Consider the following 1399-residue polypeptide: Meiosis-specific protein ASY2 (1399 aa).

Residues 10–248 enclose the HORMA domain; that stretch reads QQSLILTTEL…SQHHVLTVKV (239 aa). Positions 257-266 are enriched in acidic residues; it reads PCEDENDNMQ. 5 disordered regions span residues 257-281, 487-525, 617-656, 940-974, and 1045-1090; these read PCED…HDDQ, SKPK…SSEP, RLTG…AAPE, PPPP…VDQV, and DQDK…AAPK. Residues 267 to 281 show a composition bias toward basic and acidic residues; sequence DDERSKGPDSLHDDQ. Over residues 509–523 the composition is skewed to pro residues; sequence SAPPSSEPKSAPPSS. The segment covering 617–631 has biased composition (polar residues); that stretch reads RLTGNPSNEAQSSRS. The stretch at 1205–1246 forms a coiled coil; it reads MASLRDAAEIHKAEMSSLNDEVKRLNSREADLQKEFSDLQVA.

It localises to the chromosome. Its subcellular location is the nucleus. Its function is as follows. Required for normal meiosis. In Arabidopsis thaliana (Mouse-ear cress), this protein is Meiosis-specific protein ASY2.